A 43-amino-acid polypeptide reads, in one-letter code: CLAVATA3/ESR (CLE)-related protein 16D10 (43 aa).

The first 30 residues, 1–30 (MFTNSIKNLIIYLMPLMVTLMLLSVSFVDA), serve as a signal peptide directing secretion. A CLE motif is present at residues 31–43 (GKKPSGPNPGGNN).

It belongs to the CLV3/ESR signal peptide family. In terms of tissue distribution, highly expressed exclusively within the subventral esophageal gland cell during syncytium formation in host plants.

The protein resides in the secreted. The protein localises to the host cytoplasm. It is found in the host extracellular space. Functionally, plays a role in the differentiation or division of feeding cells (syncytia) induced in plant roots during infection. Promotes host root growth. The chain is CLAVATA3/ESR (CLE)-related protein 16D10 (16D10) from Meloidogyne arenaria (Peanut root-knot nematode).